Here is a 104-residue protein sequence, read N- to C-terminus: UPF0145 protein TM1040_1243 (104 aa).

It belongs to the UPF0145 family.

The polypeptide is UPF0145 protein TM1040_1243 (Ruegeria sp. (strain TM1040) (Silicibacter sp.)).